A 284-amino-acid chain; its full sequence is TM2 domain-containing protein almondex (284 aa).

Residues 1-32 (MRLQRQCIVVNMRSAIVLIMIFVLTGIRNSET) form the signal peptide. Residues 33-63 (ASGGNQMDLSDSKGDHKDNSNASNGNGNAND) form a disordered region. The Extracellular portion of the chain corresponds to 33 to 225 (ASGGNQMDLS…NWTQGYRWST (193 aa)). Over residues 42–51 (SDSKGDHKDN) the composition is skewed to basic and acidic residues. The span at 52–63 (SNASNGNGNAND) shows a compositional bias: low complexity. N-linked (GlcNAc...) asparagine glycans are attached at residues N53, N89, N141, N194, N206, and N216. Residues 220–267 (GYRWSTALLISLTLGGFGADRFYLGHWQEGIGKLFSFGGLGVWTIIDV) enclose the TM2 domain. A helical transmembrane segment spans residues 226–246 (ALLISLTLGGFGADRFYLGHW). Residues 247 to 249 (QEG) lie on the Cytoplasmic side of the membrane. A helical membrane pass occupies residues 250-270 (IGKLFSFGGLGVWTIIDVLLI). The Extracellular portion of the chain corresponds to 271 to 284 (SMHYLGPADGSLYI).

Belongs to the TM2 family. In terms of tissue distribution, expressed in female ovary, mainly in nurse cells (at protein level). Expressed in the brain at low levels (at protein level).

The protein localises to the membrane. Its subcellular location is the vesicle. In terms of biological role, positive regulator of Notch signaling during lateral inhibition and boundary formation. Interacts with Notch signaling at the membrane, at the level of gamma-secretase-mediated S3 cleavage. May regulate Notch signaling by regulating the subcellular localization of N/Notch in a context dependent manner. Maternal neurogenic factor involved in Notch signaling-dependent mesectodermal and neuroectodermal specification during early embryogenesis. Functions cooperatively with bisc/TM2D1 and amrt/TM2D2. Required for maintenance of neuronal function. Involved in imaginal specification of eyes and wings. The chain is TM2 domain-containing protein almondex from Drosophila melanogaster (Fruit fly).